The primary structure comprises 79 residues: CDC42 small effector protein 1 (79 aa).

2 S-palmitoyl cysteine lipidation sites follow: Cys10 and Cys11. The CRIB domain occupies 30–43; sequence IGEPMNFVHLTHIG. The segment at 41–79 is disordered; that stretch reads HIGSGDMGASDGLPRAGGVQEQMRSKCGRDRQWSNSGVL. Basic and acidic residues predominate over residues 63 to 72; that stretch reads MRSKCGRDRQ.

This sequence belongs to the CDC42SE/SPEC family.

The protein resides in the cytoplasm. It localises to the cytoskeleton. It is found in the cell membrane. Functionally, probably involved in the organization of the actin cytoskeleton by acting downstream of CDC42, inducing actin filament assembly. The sequence is that of CDC42 small effector protein 1 (cdc42se1) from Xenopus tropicalis (Western clawed frog).